The sequence spans 525 residues: tRNA-2-methylthio-N(6)-dimethylallyladenosine synthase (525 aa).

The region spanning 14–130 is the MTTase N-terminal domain; the sequence is RTYQVRTYGC…LPTLLERARH (117 aa). C23, C59, C93, C167, C171, and C174 together coordinate [4Fe-4S] cluster. Positions 153 to 400 constitute a Radical SAM core domain; sequence RESAYAGWVS…IELQERISLE (248 aa). One can recognise a TRAM domain in the interval 403-482; sequence QAQVGRTLEL…PHHLIADGAL (80 aa).

It belongs to the methylthiotransferase family. MiaB subfamily. As to quaternary structure, monomer. Requires [4Fe-4S] cluster as cofactor.

The protein localises to the cytoplasm. It carries out the reaction N(6)-dimethylallyladenosine(37) in tRNA + (sulfur carrier)-SH + AH2 + 2 S-adenosyl-L-methionine = 2-methylsulfanyl-N(6)-dimethylallyladenosine(37) in tRNA + (sulfur carrier)-H + 5'-deoxyadenosine + L-methionine + A + S-adenosyl-L-homocysteine + 2 H(+). Catalyzes the methylthiolation of N6-(dimethylallyl)adenosine (i(6)A), leading to the formation of 2-methylthio-N6-(dimethylallyl)adenosine (ms(2)i(6)A) at position 37 in tRNAs that read codons beginning with uridine. This Mycobacterium sp. (strain MCS) protein is tRNA-2-methylthio-N(6)-dimethylallyladenosine synthase.